The primary structure comprises 601 residues: AT-rich interactive domain-containing protein 3A (601 aa).

The tract at residues 1–224 (MKLQAVMETL…HMASQMPPPD (224 aa)) is disordered. Residues 60–89 (MAALAAMRAAAAGLGHPSSPGGSEDGPPIS) show a composition bias toward low complexity. Phosphoserine occurs at positions 78, 82, and 89. T99 carries the phosphothreonine modification. S102 is subject to Phosphoserine. Positions 114–123 (GHAEGDRHLM) are enriched in basic and acidic residues. At S127 the chain carries Phosphoserine. Residues 128–165 (DDDDTKSKWEEQELEELGEEEEEEEEEDDFEEEEEEEE) form an acidic region. Positions 139–166 (QELEELGEEEEEEEEEDDFEEEEEEEEG) are enriched in acidic residues. The 93-residue stretch at 243–335 (DPKRKEFLDD…YLYPYECERR (93 aa)) folds into the ARID domain. Residues S358 and S367 each carry the phosphoserine modification. Glycyl lysine isopeptide (Lys-Gly) (interchain with G-Cter in SUMO2) cross-links involve residues K403, K404, K457, and K467. Positions 449–546 (AALEQLREKL…GVLFAQPPPP (98 aa)) constitute an REKLES domain. The tract at residues 450–493 (ALEQLREKLESTEPPEKKMALVADEQQRLMQRAVQQSFLAMTAQ) is important for nuclear localization. The homodimerization stretch occupies residues 495–518 (PMNIRINSQASESRQDSAVSLTSA). Residues 542–562 (QPPPPTAPSAPGKGGVSSIGT) form an important for cytoplasmic localization region. A disordered region spans residues 545–601 (PPTAPSAPGKGGVSSIGTNTTTGSRTGASGSTVSGGQVGLPGVSTPTMSSTSNNSLP). Low complexity-rich tracts occupy residues 559–579 (SIGTNTTTGSRTGASGSTVSG) and 588–601 (STPTMSSTSNNSLP).

Homodimer. Heterodimer with ARID3B. Interacts with E2F1. Interacts with GTF2I and BTK. B-cell specific in the adult. Expressed in B-cell progenitors, down-regulated in the immature B-cell stage, and is up-regulated again at later stages of B-lymphocyte differentiation.

It localises to the nucleus. Its subcellular location is the cytoplasm. Its function is as follows. Transcription factor involved in B-cell differentiation. Binds a VH promoter proximal site necessary for induced mu-heavy-chain transcription. Binds the minor groove of a restricted ATC sequence that is sufficient for nuclear matrix association. This sequence motif is present in matrix-associating regions (MARS) proximal to the promoter and flanking E mu. Activates E mu-driven transcription by binding these sites. May be involved in the control of cell cycle progression by the RB1/E2F1 pathway. This chain is AT-rich interactive domain-containing protein 3A (Arid3a), found in Mus musculus (Mouse).